Reading from the N-terminus, the 316-residue chain is Beta-ketoacyl-[acyl-carrier-protein] synthase III (316 aa).

Residues cysteine 112 and histidine 243 contribute to the active site. Residues 244 to 248 (QANLR) are ACP-binding. Asparagine 273 is an active-site residue.

Belongs to the thiolase-like superfamily. FabH family. As to quaternary structure, homodimer.

It is found in the cytoplasm. The enzyme catalyses malonyl-[ACP] + acetyl-CoA + H(+) = 3-oxobutanoyl-[ACP] + CO2 + CoA. The protein operates within lipid metabolism; fatty acid biosynthesis. Catalyzes the condensation reaction of fatty acid synthesis by the addition to an acyl acceptor of two carbons from malonyl-ACP. Catalyzes the first condensation reaction which initiates fatty acid synthesis and may therefore play a role in governing the total rate of fatty acid production. Possesses both acetoacetyl-ACP synthase and acetyl transacylase activities. Its substrate specificity determines the biosynthesis of branched-chain and/or straight-chain of fatty acids. The sequence is that of Beta-ketoacyl-[acyl-carrier-protein] synthase III from Yersinia pestis (strain Pestoides F).